The primary structure comprises 881 residues: Cell wall protein PRY3 (881 aa).

The signal sequence occupies residues 1 to 18 (MLEFPISVLLGCLVAVKA). Residues 30–144 (LNEHNKFRAL…TWNNYIVCSY (115 aa)) form the SCP domain. N-linked (GlcNAc...) asparagine glycosylation is present at N101. The tract at residues 262–313 (VVSSDATSSTTTTSSVATSSSTTSSDPTSSTAAASSSDPASSSAAASSSAST) is disordered. Residue N360 is glycosylated (N-linked (GlcNAc...) asparagine). Disordered stretches follow at residues 381 to 400 (AADD…VSEH) and 453 to 494 (VSST…NSAA). Over residues 386-400 (QGSTSKEATSSVSEH) the composition is skewed to polar residues. 4 N-linked (GlcNAc...) asparagine glycosylation sites follow: N488, N535, N547, and N569. The interval 579–611 (IDPTLDPTDNSASPTDNAKHTSTYGSSSTGASL) is disordered. Polar residues predominate over residues 585-594 (PTDNSASPTD). The segment covering 599 to 611 (TSTYGSSSTGASL) has biased composition (low complexity). N625 is a glycosylation site (N-linked (GlcNAc...) asparagine). Disordered stretches follow at residues 758–788 (LASD…TTTT) and 800–830 (PSST…MHQP). Low complexity-rich tracts occupy residues 776 to 788 (STSN…TTTT) and 808 to 820 (RTTT…STTS). Over residues 821–830 (QQDGSAMHQP) the composition is skewed to polar residues. G853 carries the GPI-anchor amidated glycine lipid modification. The propeptide at 854-881 (AATPLSIFQCNSLAGTIAAFVVAVLFAF) is removed in mature form.

This sequence belongs to the CRISP family. The GPI-anchor is attached to the protein in the endoplasmic reticulum and serves to target the protein to the cell surface. There, the glucosamine-inositol phospholipid moiety is cleaved off and the GPI-modified mannoprotein is covalently attached via its lipidless GPI glycan remnant to the 1,6-beta-glucan of the outer cell wall layer.

The protein resides in the secreted. Its subcellular location is the cell wall. It is found in the membrane. In terms of biological role, the full-length isoform (isoform Long) is a daughter cell-specific cell wall protein required for efficient export of lipids such as acetylated sterols. Acts in detoxification of hydrophobic compounds. Involved in tolerance to organic solvents such as dimethyl sulfoxide (DMSO). Also plays a role as an inhibitor of mating. STE12 is utilized as a repressor of full-length PRY3 transcription, ensuring efficient mating. Functionally, there is no evidence that production of the short PRY3 transcript (isoform Short) is anything more than an adventitious by-product of the mechanism responsible for the repression of the full-length transcript. Moreover, no disadvantage is detectable for cells unable to make the short transcript. The chain is Cell wall protein PRY3 (PRY3) from Saccharomyces cerevisiae (strain ATCC 204508 / S288c) (Baker's yeast).